Here is a 782-residue protein sequence, read N- to C-terminus: Isoamylase 3, chloroplastic (782 aa).

Residues 1–68 (MDSIGINRAP…EKVRRFDSVR (68 aa)) constitute a chloroplast transit peptide. The span at 68–81 (RSTTARAQNGNAGR) shows a compositional bias: polar residues. The disordered stretch occupies residues 68-88 (RSTTARAQNGNAGRSMTEERG). Aspartate 445 acts as the Nucleophile in catalysis. The Proton donor role is filled by glutamate 482.

The protein belongs to the glycosyl hydrolase 13 family. In terms of tissue distribution, expressed in leaves. Expressed at low levels in developing endosperm.

It is found in the plastid. The protein localises to the chloroplast. The protein resides in the amyloplast. It catalyses the reaction Hydrolysis of (1-&gt;6)-alpha-D-glucosidic branch linkages in glycogen, amylopectin and their beta-limit dextrins.. Its function is as follows. Starch-debranching enzyme that plays a role in the degradation of transitory starch during the night in leaf blades, facilitates the formation of spherical amyloplasts containing compound granules in the endosperm, and affects morphological characteristics of plastids. The protein is Isoamylase 3, chloroplastic of Oryza sativa subsp. japonica (Rice).